A 513-amino-acid polypeptide reads, in one-letter code: GMP synthase [glutamine-hydrolyzing] (513 aa).

One can recognise a Glutamine amidotransferase type-1 domain in the interval 7-198 (LIVVVDFGGQ…LFNIAGCRGD (192 aa)). C84 (nucleophile) is an active-site residue. Active-site residues include H172 and E174. Residues 199 to 388 (WTTESFITRQ…LGVPEEIVGR (190 aa)) form the GMPS ATP-PPase domain. Residue 226-232 (SGGVDSS) coordinates ATP.

In terms of assembly, homodimer.

The enzyme catalyses XMP + L-glutamine + ATP + H2O = GMP + L-glutamate + AMP + diphosphate + 2 H(+). It participates in purine metabolism; GMP biosynthesis; GMP from XMP (L-Gln route): step 1/1. In terms of biological role, catalyzes the synthesis of GMP from XMP. This is GMP synthase [glutamine-hydrolyzing] from Symbiobacterium thermophilum (strain DSM 24528 / JCM 14929 / IAM 14863 / T).